The following is a 136-amino-acid chain: Large ribosomal subunit protein uL16 (136 aa).

The protein belongs to the universal ribosomal protein uL16 family. In terms of assembly, part of the 50S ribosomal subunit.

Its function is as follows. Binds 23S rRNA and is also seen to make contacts with the A and possibly P site tRNAs. The sequence is that of Large ribosomal subunit protein uL16 from Actinobacillus succinogenes (strain ATCC 55618 / DSM 22257 / CCUG 43843 / 130Z).